A 135-amino-acid chain; its full sequence is DNA-directed RNA polymerase subunit omega (135 aa).

This sequence belongs to the RNA polymerase subunit omega family. The RNAP catalytic core consists of 2 alpha, 1 beta, 1 beta' and 1 omega subunit. When a sigma factor is associated with the core the holoenzyme is formed, which can initiate transcription.

The catalysed reaction is RNA(n) + a ribonucleoside 5'-triphosphate = RNA(n+1) + diphosphate. Promotes RNA polymerase assembly. Latches the N- and C-terminal regions of the beta' subunit thereby facilitating its interaction with the beta and alpha subunits. This Sinorhizobium medicae (strain WSM419) (Ensifer medicae) protein is DNA-directed RNA polymerase subunit omega.